The following is a 177-amino-acid chain: Meiotically up-regulated gene 121 protein (177 aa).

The N-terminal stretch at 1 to 23 is a signal peptide; the sequence is MKGFVVISRFILTLFILITPGLA. N-linked (GlcNAc...) asparagine glycosylation is present at N121.

The protein resides in the endoplasmic reticulum. The protein localises to the golgi apparatus. Its function is as follows. Has a role in meiosis. The sequence is that of Meiotically up-regulated gene 121 protein (mug121) from Schizosaccharomyces pombe (strain 972 / ATCC 24843) (Fission yeast).